The following is an 856-amino-acid chain: DNA gyrase subunit A (856 aa).

The Topo IIA-type catalytic domain maps to 45–517 (LPDARDGLKP…DDGTVTHEDL (473 aa)). Tyr133 acts as the O-(5'-phospho-DNA)-tyrosine intermediate in catalysis. The GyrA-box signature appears at 544 to 550 (QHRGGKG). The interval 822 to 856 (TVASVDTHPRTDDSSEADSGDGESESENATATTPS) is disordered. The segment covering 835–847 (SSEADSGDGESES) has biased composition (acidic residues).

This sequence belongs to the type II topoisomerase GyrA/ParC subunit family. As to quaternary structure, heterotetramer, composed of two GyrA and two GyrB chains. In the heterotetramer, GyrA contains the active site tyrosine that forms a transient covalent intermediate with DNA, while GyrB binds cofactors and catalyzes ATP hydrolysis.

It is found in the cytoplasm. The catalysed reaction is ATP-dependent breakage, passage and rejoining of double-stranded DNA.. In terms of biological role, a type II topoisomerase that negatively supercoils closed circular double-stranded (ds) DNA in an ATP-dependent manner to modulate DNA topology and maintain chromosomes in an underwound state. Negative supercoiling favors strand separation, and DNA replication, transcription, recombination and repair, all of which involve strand separation. Also able to catalyze the interconversion of other topological isomers of dsDNA rings, including catenanes and knotted rings. Type II topoisomerases break and join 2 DNA strands simultaneously in an ATP-dependent manner. The chain is DNA gyrase subunit A from Haloquadratum walsbyi (strain DSM 16790 / HBSQ001).